A 179-amino-acid chain; its full sequence is Transcription termination/antitermination protein NusG (179 aa).

Positions 130–157 constitute a KOW domain; sequence EGDVVQIIDGAFMGQEGRVVEIENNKVK.

Belongs to the NusG family.

In terms of biological role, participates in transcription elongation, termination and antitermination. This chain is Transcription termination/antitermination protein NusG, found in Streptococcus pyogenes serotype M1.